We begin with the raw amino-acid sequence, 401 residues long: Argininosuccinate synthase (401 aa).

9 to 17 (AYSGGLDTS) is a binding site for ATP. Tyrosine 88 contacts L-citrulline. Glycine 118 provides a ligand contact to ATP. Positions 120, 124, and 125 each coordinate L-aspartate. An L-citrulline-binding site is contributed by asparagine 124. L-citrulline-binding residues include arginine 128, serine 177, serine 186, glutamate 262, and tyrosine 274.

This sequence belongs to the argininosuccinate synthase family. Type 1 subfamily. Homotetramer.

The protein localises to the cytoplasm. It catalyses the reaction L-citrulline + L-aspartate + ATP = 2-(N(omega)-L-arginino)succinate + AMP + diphosphate + H(+). Its pathway is amino-acid biosynthesis; L-arginine biosynthesis; L-arginine from L-ornithine and carbamoyl phosphate: step 2/3. The protein is Argininosuccinate synthase of Chlorobaculum parvum (strain DSM 263 / NCIMB 8327) (Chlorobium vibrioforme subsp. thiosulfatophilum).